Consider the following 138-residue polypeptide: Putative pre-16S rRNA nuclease (138 aa).

The protein belongs to the YqgF nuclease family.

The protein localises to the cytoplasm. In terms of biological role, could be a nuclease involved in processing of the 5'-end of pre-16S rRNA. This is Putative pre-16S rRNA nuclease from Salmonella typhimurium (strain LT2 / SGSC1412 / ATCC 700720).